Consider the following 339-residue polypeptide: Homocysteine S-methyltransferase 2 (339 aa).

In terms of domain architecture, Hcy-binding spans 12-326 (AVRRWVDAAG…NTIRAIHRTL (315 aa)). Zn(2+) is bound by residues Cys-244, Cys-311, and Cys-312.

Monomer. Requires Zn(2+) as cofactor.

The enzyme catalyses S-methyl-L-methionine + L-homocysteine = 2 L-methionine + H(+). Its function is as follows. Catalyzes methyl transfer from S-methylmethionine (SMM) to adenosyl-L-homocysteine (AdoMet). SMM degradation (by HMT-1, HMT-2, HMT-3 and HMT-4) and biosynthesis (by MMT1) constitute the SMM cycle in plants, which is probably required to achieve short term control of AdoMet level. This Zea mays (Maize) protein is Homocysteine S-methyltransferase 2 (HMT-2).